We begin with the raw amino-acid sequence, 306 residues long: Homoserine O-acetyltransferase (306 aa).

The active-site Acyl-thioester intermediate is the C142. Substrate is bound by residues K163 and S192. Catalysis depends on H235, which acts as the Proton acceptor. Residue E237 is part of the active site. R249 is a substrate binding site.

Belongs to the MetA family.

It localises to the cytoplasm. The enzyme catalyses L-homoserine + acetyl-CoA = O-acetyl-L-homoserine + CoA. The protein operates within amino-acid biosynthesis; L-methionine biosynthesis via de novo pathway; O-acetyl-L-homoserine from L-homoserine: step 1/1. In terms of biological role, transfers an acetyl group from acetyl-CoA to L-homoserine, forming acetyl-L-homoserine. This is Homoserine O-acetyltransferase from Clostridium botulinum (strain Alaska E43 / Type E3).